The primary structure comprises 182 residues: A-type ATP synthase subunit E (182 aa).

The protein belongs to the V-ATPase E subunit family. As to quaternary structure, has multiple subunits with at least A(3), B(3), C, D, E, F, H, I and proteolipid K(x).

It localises to the cell membrane. In terms of biological role, component of the A-type ATP synthase that produces ATP from ADP in the presence of a proton gradient across the membrane. This Methanothrix thermoacetophila (strain DSM 6194 / JCM 14653 / NBRC 101360 / PT) (Methanosaeta thermophila) protein is A-type ATP synthase subunit E.